A 249-amino-acid polypeptide reads, in one-letter code: INO80 complex subunit 1 (249 aa).

2 C2H2-type zinc fingers span residues 73 to 100 (YTCE…LRSH) and 106 to 131 (FICS…RTVH).

In terms of assembly, component of the INO80 chromatin remodeling complex.

It is found in the nucleus. It localises to the cytoplasm. In terms of biological role, component of the INO80 complex which remodels chromatin by shifting nucleosomes and is involved in DNA repair. This chain is INO80 complex subunit 1 (iec1), found in Schizosaccharomyces pombe (strain 972 / ATCC 24843) (Fission yeast).